Consider the following 578-residue polypeptide: Asparagine synthetase [glutamine-hydrolyzing] 2 (578 aa).

Catalysis depends on cysteine 2, which acts as the For GATase activity. Positions 2–185 (CGILAVLGCI…PGHIYSSKQG (184 aa)) constitute a Glutamine amidotransferase type-2 domain. L-glutamine is bound by residues 50-54 (RLAII), 75-77 (NGE), and aspartate 98. The Asparagine synthetase domain occupies 210–450 (LRNAFEKAVI…LPKHILYRQK (241 aa)). ATP contacts are provided by residues leucine 231, isoleucine 267, and 341-342 (SG).

Expressed in the vascular region adjacent to leaf mesophyll cells in the companion cell-sieve tube element complex.

It catalyses the reaction L-aspartate + L-glutamine + ATP + H2O = L-asparagine + L-glutamate + AMP + diphosphate + H(+). Its pathway is amino-acid biosynthesis; L-asparagine biosynthesis. Functionally, essential for nitrogen assimilation, distribution and remobilization within the plant via the phloem. The sequence is that of Asparagine synthetase [glutamine-hydrolyzing] 2 (ASN2) from Arabidopsis thaliana (Mouse-ear cress).